A 461-amino-acid chain; its full sequence is Metacaspase-1 (461 aa).

4 stretches are compositionally biased toward gly residues: residues 1–21 (MSYPGQGGNTYGGGPPGGYGG), 45–66 (QYGGGYGGPGGGYGGSGGGYGP), 74–86 (QYGGSGGPGGYGP), and 105–119 (PGGQGGGGGGYGHPG). Residues 1–154 (MSYPGQGGNT…PQGNQAFGGT (154 aa)) form a disordered region. 2 stretches are compositionally biased toward low complexity: residues 121–131 (GNQAPPGQYGQ) and 138–148 (HGNHNMPPQGN). Residues His252 and Cys308 contribute to the active site.

The protein belongs to the peptidase C14B family.

Its function is as follows. Involved in cell death (apoptosis). The chain is Metacaspase-1 (MCA1) from Yarrowia lipolytica (strain CLIB 122 / E 150) (Yeast).